We begin with the raw amino-acid sequence, 191 residues long: Transcriptional activator GvpE1 (191 aa).

Residues 31-51 (SDGASDHADQPPDEGATQRYT) form a disordered region. Residue 140 to 145 (KRKVYR) participates in DNA binding. The leucine-zipper stretch occupies residues 150-181 (EGAFTRIDHMVDQLLLFSLVLKAVMTDCKARQ).

In terms of assembly, interacts with GvpD.

It is found in the cytoplasm. With respect to regulation, the amount of protein that accumulates is controlled by GvpD; GvpD causes a reduction in the amount of GvpE, preventing accumulation of excessive amounts of gas vesicles. Its function is as follows. Plays a regulatory role in gas vesicle synthesis, activates transcription of the gvpA operon, and probably of the gvpD operon. Gas vesicles are hollow, gas filled proteinaceous nanostructures found in several microbial planktonic microorganisms. They allow positioning of halobacteria at the optimal depth for growth in the poorly aerated, shallow brine pools of their habitat. Expression of a 9.5 kb p-vac DNA fragment containing 2 divergently transcribed regions (gvpD-gvpE-gvpF-gvpG-gvpH-gvpI-gvpJ-gvpK-gvpL-gvpM and gvpA-gvpC-gvpN-gvpO) allows H.volcanii to produce gas vesicles. A similar region restores gas vesicle production in H.halobium without the p-vac locus, but it still has the c-vac locus. This is Transcriptional activator GvpE1 (gvpE11) from Halobacterium salinarum (strain ATCC 700922 / JCM 11081 / NRC-1) (Halobacterium halobium).